The sequence spans 311 residues: 4-hydroxy-tetrahydrodipicolinate synthase (311 aa).

Thr49 contacts pyruvate. Catalysis depends on Tyr138, which acts as the Proton donor/acceptor. The Schiff-base intermediate with substrate role is filled by Lys166. A pyruvate-binding site is contributed by Ile207.

The protein belongs to the DapA family. As to quaternary structure, homotetramer; dimer of dimers.

The protein resides in the cytoplasm. The enzyme catalyses L-aspartate 4-semialdehyde + pyruvate = (2S,4S)-4-hydroxy-2,3,4,5-tetrahydrodipicolinate + H2O + H(+). It functions in the pathway amino-acid biosynthesis; L-lysine biosynthesis via DAP pathway; (S)-tetrahydrodipicolinate from L-aspartate: step 3/4. In terms of biological role, catalyzes the condensation of (S)-aspartate-beta-semialdehyde [(S)-ASA] and pyruvate to 4-hydroxy-tetrahydrodipicolinate (HTPA). The sequence is that of 4-hydroxy-tetrahydrodipicolinate synthase from Lactobacillus acidophilus (strain ATCC 700396 / NCK56 / N2 / NCFM).